The following is a 156-amino-acid chain: 6,7-dimethyl-8-ribityllumazine synthase (156 aa).

5-amino-6-(D-ribitylamino)uracil-binding positions include F22, 57 to 59, and 81 to 83; these read AYE and TVI. A (2S)-2-hydroxy-3-oxobutyl phosphate-binding site is contributed by 86–87; it reads GT. The Proton donor role is filled by H89. Residue F114 coordinates 5-amino-6-(D-ribitylamino)uracil. R128 lines the (2S)-2-hydroxy-3-oxobutyl phosphate pocket.

The protein belongs to the DMRL synthase family. In terms of assembly, forms an icosahedral capsid composed of 60 subunits, arranged as a dodecamer of pentamers.

It carries out the reaction (2S)-2-hydroxy-3-oxobutyl phosphate + 5-amino-6-(D-ribitylamino)uracil = 6,7-dimethyl-8-(1-D-ribityl)lumazine + phosphate + 2 H2O + H(+). It functions in the pathway cofactor biosynthesis; riboflavin biosynthesis; riboflavin from 2-hydroxy-3-oxobutyl phosphate and 5-amino-6-(D-ribitylamino)uracil: step 1/2. Catalyzes the formation of 6,7-dimethyl-8-ribityllumazine by condensation of 5-amino-6-(D-ribitylamino)uracil with 3,4-dihydroxy-2-butanone 4-phosphate. This is the penultimate step in the biosynthesis of riboflavin. The sequence is that of 6,7-dimethyl-8-ribityllumazine synthase from Cronobacter sakazakii (strain ATCC BAA-894) (Enterobacter sakazakii).